The sequence spans 488 residues: Zinc finger protein 345 (488 aa).

15 C2H2-type zinc fingers span residues 62–84 (LECKECGKDFSFVSVLVRHQRIH), 90–112 (YECKECGKAFGSGANLAYHQRIH), 118–140 (FECKECGKAFGSGSNLTHHQRIH), 146–168 (YECKECGKAFSFGSGLIRHQIIH), 174–196 (YECKECGKSFSFESALIRHHRIH), 202–224 (YECIDCGKAFGSGSNLTQHRRIH), 230–252 (YECKACGMAFSSGSALTRHQRIH), 258–280 (YICNECGKAFSFGSALTRHQRIH), 286–308 (YVCKECGKAFNSGSDLTQHQRIH), 314–336 (YECKECEKAFRSGSKLIQHQRMH), 342–364 (YECKECGKTFSSGSDLTQHHRIH), 370–392 (YECKECGKAFGSGSKLIQHQLIH), 398–420 (YECKECGKSFSSGSALNRHQRIH), 426–448 (YECKECGKAFYSGSSLTQHQRIH), and 454–476 (YECKNCGKAYGRDSEFQQHKKSH).

It belongs to the krueppel C2H2-type zinc-finger protein family.

It localises to the nucleus. May be involved in transcriptional regulation. This Homo sapiens (Human) protein is Zinc finger protein 345 (ZNF345).